We begin with the raw amino-acid sequence, 628 residues long: ATP-binding cassette sub-family F member 2 (628 aa).

The disordered stretch occupies residues 1–57 (MPSDLAKKKAAKKKEAAKARQRPRKGHEENGDAVTEPQVAEEKIEEANGRETTGDGE). The span at 40-53 (AEEKIEEANGRETT) shows a compositional bias: basic and acidic residues. ABC transporter domains follow at residues 91–330 (VHII…ENQM) and 401–618 (IMVQ…VDEE). Position 123–130 (123–130 (GLNGIGKS)) interacts with ATP. Thr223 bears the Phosphothreonine mark. Residue Lys309 is modified to N6-acetyllysine. 435 to 442 (GPNGAGKS) is a binding site for ATP. Ser517 carries the post-translational modification Phosphoserine.

The protein belongs to the ABC transporter superfamily. ABCF family. EF3 subfamily.

This Mus musculus (Mouse) protein is ATP-binding cassette sub-family F member 2.